Here is a 417-residue protein sequence, read N- to C-terminus: Serine hydroxymethyltransferase (417 aa).

Residues Leu121 and Gly125 to Leu127 contribute to the (6S)-5,6,7,8-tetrahydrofolate site. The residue at position 229 (Lys229) is an N6-(pyridoxal phosphate)lysine. Residue Ser355–Phe357 coordinates (6S)-5,6,7,8-tetrahydrofolate.

The protein belongs to the SHMT family. Homodimer. The cofactor is pyridoxal 5'-phosphate.

The protein localises to the cytoplasm. It catalyses the reaction (6R)-5,10-methylene-5,6,7,8-tetrahydrofolate + glycine + H2O = (6S)-5,6,7,8-tetrahydrofolate + L-serine. It functions in the pathway one-carbon metabolism; tetrahydrofolate interconversion. The protein operates within amino-acid biosynthesis; glycine biosynthesis; glycine from L-serine: step 1/1. Its function is as follows. Catalyzes the reversible interconversion of serine and glycine with tetrahydrofolate (THF) serving as the one-carbon carrier. This reaction serves as the major source of one-carbon groups required for the biosynthesis of purines, thymidylate, methionine, and other important biomolecules. Also exhibits THF-independent aldolase activity toward beta-hydroxyamino acids, producing glycine and aldehydes, via a retro-aldol mechanism. This Xanthomonas axonopodis pv. citri (strain 306) protein is Serine hydroxymethyltransferase.